A 629-amino-acid polypeptide reads, in one-letter code: MNRYTTIKQLGDGTYGSVLLGRSIESGELIAIKKMKRKFYSWEECMNLREVKSLKKLNHANIVKLKEVIRENDHLYFIFEYMKENLYQLIKERNKLFPESAIRNIMYQILQGLAFIHKHGFFHRDLKPENLLCMGPELVKIADFGLAREIRSRPPYTDYVSTRWYRAPEVLLRSTNYSSPIDVWAVGCIMAEVYTLRPLFPGASEIDTIFKICQVLGTPKKTDWPEGYQLSSAMNFIWPQCIPNNLKTLIPNASSEAIQLLRDLLQWDPKKRPTASQALRYPYFQIGHPLGISTQDSGKPQKDVQDKTGPPPYVKPAPPAQAPTKAHTLISSRPNQASQPHQHFVYPYKGEASRTEQLSHVQEGQPNPPFFPSLHNKNLPPKILAGLEQKSGDMKPKSRRRWGLISRSTKGSDDWADLADLDFSSSLTRIDVKNKKRQSDDPLCRFESVLDLKPSEPVGTGTSVSTQASSQRRDTPTLQSTAKQHYLKHSRYLPGINIRNGVLPNPGKDFLPSSSWSSSGLSGKSSGTVSVVSKITSVGSGSTSSTGLTGSYIPSFLKKEVGSVMQRVQLAPLAAPSPGYSSLKAVRPHPGRPFFHTQPRSTPGLIPRPPAVQPVHGRIDWSSKYPSRR.

Positions 4-284 (YTTIKQLGDG…ASQALRYPYF (281 aa)) constitute a Protein kinase domain. Residues 10-18 (LGDGTYGSV) and Lys-33 each bind ATP. The active-site Proton acceptor is Asp-125. A Phosphothreonine modification is found at Thr-157. Residue Tyr-159 is modified to Phosphotyrosine. The residue at position 161 (Ser-161) is a Phosphoserine. Disordered stretches follow at residues 292 to 322 (ISTQ…PAQA), 454 to 482 (PSEP…QSTA), and 579 to 629 (GYSS…PSRR). Residues 309–321 (GPPPYVKPAPPAQ) show a composition bias toward pro residues. Residues 460-482 (TGTSVSTQASSQRRDTPTLQSTA) show a composition bias toward polar residues.

It belongs to the protein kinase superfamily. CMGC Ser/Thr protein kinase family. CDC2/CDKX subfamily. It depends on Mg(2+) as a cofactor. In terms of processing, autophosphorylated on serine and threonine residues. Phosphorylation at Thr-157 increases kinase activity. Expressed in embryonic heart from day 11. Highly expressed in the uterus and at lower levels in brain, heart, lung, kidney, skeletal muscle, ovary and liver in adult tissues.

It localises to the cytoplasm. It is found in the cell projection. Its subcellular location is the cilium. The protein localises to the nucleus. The protein resides in the cytoskeleton. It localises to the cilium basal body. It catalyses the reaction L-seryl-[protein] + ATP = O-phospho-L-seryl-[protein] + ADP + H(+). It carries out the reaction L-threonyl-[protein] + ATP = O-phospho-L-threonyl-[protein] + ADP + H(+). Required for ciliogenesis, particularly in neuronal and retinal progenitor cells. Phosphorylates KIF3A. Involved in the control of ciliary length. Regulates the ciliary localization of SHH pathway components as well as the localization of IFT components at ciliary tips. May play a role in cardiac development. Regulates intraflagellar transport (IFT) speed and negatively regulates cilium length in a cAMP and mTORC1 signaling-dependent manner and this regulation requires its kinase activity. The protein is Serine/threonine-protein kinase ICK (Cilk1) of Rattus norvegicus (Rat).